The chain runs to 165 residues: DELTA-actitoxin-Oor1a (165 aa).

Positions 1–17 (ATFRVLAKVLAELGKVS) are N-terminal region. Residues Ser-41, Val-74, Ser-92, Pro-94, and Tyr-125 each contribute to the phosphocholine site. The tract at residues 92–107 (SVPYDYNLYSNWWNVK) is trp-rich region, which is important for the binding to lipid membrane.

The protein belongs to the actinoporin family. Sea anemone subfamily. In terms of assembly, octamer or nonamer in membranes. Monomer in the soluble state.

Its subcellular location is the secreted. It localises to the nematocyst. It is found in the target cell membrane. In terms of biological role, pore-forming protein that forms cations-selective hydrophilic pores of around 1 nm and causes cardiac stimulation and cytolysis. Pore formation is a multi-step process that involves specific recognition of membrane sphingomyelin (but neither cholesterol nor phosphatidylcholine) using aromatic rich region and adjacent phosphocholine (POC) binding site, firm binding to the membrane (mainly driven by hydrophobic interactions) accompanied by the transfer of the N-terminal region to the lipid-water interface and finally pore formation after oligomerization of monomers. Cytolytic effects include red blood cells hemolysis, platelet aggregation and lysis, cytotoxic and cytostatic effects on fibroblasts. Lethality in mammals has been ascribed to severe vasospasm of coronary vessels, cardiac arrhythmia, and inotropic effects. The sequence is that of DELTA-actitoxin-Oor1a from Oulactis orientalis (Japan anemone).